Consider the following 344-residue polypeptide: Outer membrane protein A (344 aa).

At 1–14 (MKAIFVLNAAPKDN) the chain is on the periplasmic side. Residues 15–24 (TWYAGGKLGW) traverse the membrane as a beta stranded segment. Residues 25 to 49 (SQYHDTGFYGNGFQNNNGPTRNDQL) are Extracellular-facing. The chain crosses the membrane as a beta stranded span at residues 50-59 (GAGAFGGYQV). The Periplasmic portion of the chain corresponds to 60–62 (NPY). Residues 63–71 (LGFEMGYDW) traverse the membrane as a beta stranded segment. Residues 72–89 (LGRMAYKGSVDNGAFKAQ) lie on the Extracellular side of the membrane. Residues 90 to 100 (GVQLTAKLGYP) traverse the membrane as a beta stranded segment. Over 101 to 104 (ITDD) the chain is Periplasmic. The chain crosses the membrane as a beta stranded span at residues 105–114 (LDIYTRLGGM). At 115–139 (VWRADSKGNYASTGVSRSEHDTGVS) the chain is on the extracellular side. Residues 140 to 149 (PVFAGGVEWA) traverse the membrane as a beta stranded segment. The Periplasmic segment spans residues 150–153 (VTRD). The beta stranded transmembrane segment at 154–162 (IATRLEYQW) threads the bilayer. At 163-179 (VNNIGDAGTVGTRPDNG) the chain is on the extracellular side. A beta stranded transmembrane segment spans residues 180-188 (MLSLGVSYR). Residues 189–344 (FGQEDAAPVV…YKEVVTQPQA (156 aa)) are Periplasmic-facing. Tandem repeats lie at residues 199-200 (AP), 201-202 (AP), 203-204 (AP), and 205-206 (AP). Residues 199 to 206 (APAPAPAP) are 4 X 2 AA tandem repeats of A-P. An OmpA-like domain is found at 208-336 (VATKHFTLKS…RVEIEVKGYK (129 aa)). A disulfide bond links cysteine 309 and cysteine 321.

The protein belongs to the outer membrane OOP (TC 1.B.6) superfamily. OmpA family. As to quaternary structure, monomer and homodimer.

Its subcellular location is the cell outer membrane. In terms of biological role, with TolR probably plays a role in maintaining the position of the peptidoglycan cell wall in the periplasm. Acts as a porin with low permeability that allows slow penetration of small solutes; an internal gate slows down solute passage. Its function is as follows. Required for conjugation with F-type plasmids; probably serves as the mating receptor on recipient cells. This chain is Outer membrane protein A, found in Klebsiella pneumoniae.